Reading from the N-terminus, the 273-residue chain is GDNF family receptor alpha-4 (273 aa).

The N-linked (GlcNAc...) asparagine glycan is linked to asparagine 192. A lipid anchor (GPI-anchor amidated asparagine) is attached at asparagine 250. Positions alanine 251 to leucine 273 are cleaved as a propeptide — removed in mature form.

Belongs to the GDNFR family. Interacts with ARTN ligand and RET: forms a 2:2:2 ternary complex composed of ARTN ligand, GFRA3 and RET receptor. Interacts with SORL1. As to expression, weakly expressed in heart, brain and testis.

It is found in the cell membrane. The protein localises to the secreted. Its function is as follows. Receptor for persephin (PSPN), a growth factor that exhibits neurotrophic activity on mesencephalic dopaminergic and motor neurons. Acts by binding to its coreceptor, GFRA4, leading to autophosphorylation and activation of the RET receptor. May be important in C-cell development and, in the postnatal development of the adrenal medulla. The chain is GDNF family receptor alpha-4 (Gfra4) from Rattus norvegicus (Rat).